The chain runs to 876 residues: Leucine--tRNA ligase (876 aa).

The 'HIGH' region signature appears at 43–53; the sequence is PYPSGRIHMGH. A 'KMSKS' region motif is present at residues 632–636; the sequence is KMSKS. Position 635 (Lys635) interacts with ATP.

This sequence belongs to the class-I aminoacyl-tRNA synthetase family.

The protein resides in the cytoplasm. It carries out the reaction tRNA(Leu) + L-leucine + ATP = L-leucyl-tRNA(Leu) + AMP + diphosphate. The sequence is that of Leucine--tRNA ligase from Rhizobium etli (strain ATCC 51251 / DSM 11541 / JCM 21823 / NBRC 15573 / CFN 42).